The primary structure comprises 272 residues: Dermonecrotic toxin LvSicTox-alphaIC1bv (272 aa).

His-5 is a catalytic residue. Residues Glu-25 and Asp-27 each coordinate Mg(2+). His-41 (nucleophile) is an active-site residue. Intrachain disulfides connect Cys-45–Cys-51 and Cys-47–Cys-189. Residue Asp-84 coordinates Mg(2+).

The protein belongs to the arthropod phospholipase D family. Class II subfamily. Mg(2+) is required as a cofactor. Expressed by the venom gland.

The protein localises to the secreted. The enzyme catalyses an N-(acyl)-sphingosylphosphocholine = an N-(acyl)-sphingosyl-1,3-cyclic phosphate + choline. It catalyses the reaction an N-(acyl)-sphingosylphosphoethanolamine = an N-(acyl)-sphingosyl-1,3-cyclic phosphate + ethanolamine. It carries out the reaction a 1-acyl-sn-glycero-3-phosphocholine = a 1-acyl-sn-glycero-2,3-cyclic phosphate + choline. The catalysed reaction is a 1-acyl-sn-glycero-3-phosphoethanolamine = a 1-acyl-sn-glycero-2,3-cyclic phosphate + ethanolamine. Dermonecrotic toxins cleave the phosphodiester linkage between the phosphate and headgroup of certain phospholipids (sphingolipid and lysolipid substrates), forming an alcohol (often choline) and a cyclic phosphate. This toxin acts on sphingomyelin (SM). It may also act on ceramide phosphoethanolamine (CPE), lysophosphatidylcholine (LPC) and lysophosphatidylethanolamine (LPE), but not on lysophosphatidylserine (LPS), and lysophosphatidylglycerol (LPG). It acts by transphosphatidylation, releasing exclusively cyclic phosphate products as second products. Induces dermonecrosis, hemolysis, increased vascular permeability, edema, inflammatory response, and platelet aggregation. This chain is Dermonecrotic toxin LvSicTox-alphaIC1bv, found in Loxosceles variegata (Recluse spider).